A 394-amino-acid polypeptide reads, in one-letter code: Magnesium transporter MRS2-2 (394 aa).

The interval 115 to 145 is disordered; it reads PVGNASHNGGQGDGKEIAGAQNDGDTGDEDE. 2 helical membrane passes run 329–349 and 366–386; these read LVLSSGTVCLSMYSLVAGIFG and YVVGLTGTLCVVVFVIIMSYA. Residues 349–351 carry the Required for magnesium transport activity motif; it reads GMN.

The protein belongs to the CorA metal ion transporter (MIT) (TC 1.A.35.5) family. As to expression, expressed in the whole plant but preferentially in the mature anthers.

Its subcellular location is the membrane. Functionally, low-affinity magnesium transporter that mediates the influx of magnesium. Plays a crucial role in male gametophyte development and male fertility. This is Magnesium transporter MRS2-2 (MRS2-2) from Arabidopsis thaliana (Mouse-ear cress).